A 550-amino-acid chain; its full sequence is Glypican-1 (550 aa).

Positions 1–20 (MRFFPWGFWLLCVASAPARG) are cleaved as a signal peptide. 7 disulfides stabilise this stretch: cysteine 29–cysteine 65, cysteine 59–cysteine 253, cysteine 66–cysteine 256, cysteine 188–cysteine 340, cysteine 243–cysteine 276, cysteine 265–cysteine 412, and cysteine 269–cysteine 398. Residues asparagine 76 and asparagine 113 are each glycosylated (N-linked (GlcNAc...) asparagine). Asparagine 382 is a glycosylation site (N-linked (GlcNAc...) asparagine). Disordered stretches follow at residues 475–494 (FQDASDDMSGSGSGDSCPDD) and 502–522 (KSPSTRQPETHAIPKQSGHGV). Residues 481 to 494 (DMSGSGSGDSCPDD) are compositionally biased toward low complexity. 3 O-linked (Xyl...) (heparan sulfate) serine glycosylation sites follow: serine 483, serine 485, and serine 487. Glycine 524 carries the GPI-anchor amidated glycine lipid modification. Positions 525–550 (ASSRSLPSAFLLFLSGASIVVQHLWR) are cleaved as a propeptide — removed in mature form.

This sequence belongs to the glypican family. Post-translationally, O-glycosylated with heparan sulfate.

It is found in the cell membrane. The protein resides in the endosome. It localises to the secreted. The protein localises to the extracellular space. Cell surface proteoglycan that bears heparan sulfate. Modulates Wnt-signaling pathway. In Gallus gallus (Chicken), this protein is Glypican-1 (GPC1).